A 396-amino-acid chain; its full sequence is L-lactate dehydrogenase (396 aa).

The region spanning 1 to 380 (MIISAASDYR…TQDSLVQGLG (380 aa)) is the FMN hydroxy acid dehydrogenase domain. Tyrosine 24 contributes to the substrate binding site. Residues serine 106 and glutamine 127 each contribute to the FMN site. Position 129 (tyrosine 129) interacts with substrate. Threonine 155 contacts FMN. Substrate is bound at residue arginine 164. Residue lysine 251 coordinates FMN. Histidine 275 acts as the Proton acceptor in catalysis. Arginine 278 is a substrate binding site. 306–330 (DSGIRNGLDVVRMIALGADTVLLGR) serves as a coordination point for FMN.

This sequence belongs to the FMN-dependent alpha-hydroxy acid dehydrogenase family. FMN is required as a cofactor.

The protein localises to the cell inner membrane. The catalysed reaction is (S)-lactate + A = pyruvate + AH2. Functionally, catalyzes the conversion of L-lactate to pyruvate. Is coupled to the respiratory chain. The polypeptide is L-lactate dehydrogenase (Shigella boydii serotype 4 (strain Sb227)).